The sequence spans 134 residues: Small ribosomal subunit protein uS11 (134 aa).

This sequence belongs to the universal ribosomal protein uS11 family. Part of the 30S ribosomal subunit. Interacts with proteins S7 and S18. Binds to IF-3.

In terms of biological role, located on the platform of the 30S subunit, it bridges several disparate RNA helices of the 16S rRNA. Forms part of the Shine-Dalgarno cleft in the 70S ribosome. This chain is Small ribosomal subunit protein uS11, found in Albidiferax ferrireducens (strain ATCC BAA-621 / DSM 15236 / T118) (Rhodoferax ferrireducens).